An 838-amino-acid polypeptide reads, in one-letter code: MSDTDGKKPLGLGGGSRSGQVKQSFSHGRTKSVLVETKRKRVVVPKPGASGSSTTTSSPSHLGDPAKRPAGISDAEMERRLAALRAAKLREVDDAKRRAEEERQREEERQRRREELEAKEREERERAEALRQKAEDEERARREAEEAARRAEEAKRAPAPAPAAAQPDAADSRASAPTSAKPGLPPSRKEREREADRDRTTKKDDSRRSGKLTLNEALSGEGGRTRSLAAMKREQEKARQKAMGFGHKAEKQVRDVQLPETIVVQELANRMAERAADVVKALMKMGMMVTMNQSIDADTAELVIEEFGHRAVRVSDADVEHVIDTVEDKAEDLQPRPPIITIMGHVDHGKTSLLDAIRKTSVVSGEAGGITQHIGAYQVKTESGAVLTFLDTPGHAAFTSMRARGAQVTDIVVLVVAADDAVMPQTVEAIKHAKAAKVPMIVAINKIDKPDADPNKVRTDLLQHEVIVEKMSGDVLDVEVSAKTGLGLDELLENIALQAELLDLRANPKRAAQGAVIEAKLDVGRGPVATVLVQHGTLKRGDIFVVGQQWGKVRALVNDKGERVDEAGPSVPVEVLGLNGTPEAGDVLNVVETEAQAREIADYREKAARDKRAAAGAATTLEQLMAKAKADADVAELPVVIKADVQGSAEAIVQALEKVGNEEVRVRVLHYGVGAITETDIGLAEASQAAVIGFNVRANASARQAANQKSVEIRYYSVIYDLVDDVKKAASGLLKAEVREHFIGYARIQEVFRITGVGNVAGCLVTEGVARRSAGVRLLRDNVVIHEGTLKTLKRFKDEVKEVQSGQECGMAFERYEDIRAGDVIEIFEREEVERKLA.

Positions 1 to 235 (MSDTDGKKPL…RSLAAMKREQ (235 aa)) are disordered. A compositionally biased stretch (polar residues) spans 18-27 (SGQVKQSFSH). Residues 50–60 (SGSSTTTSSPS) show a composition bias toward low complexity. Basic and acidic residues predominate over residues 88 to 156 (KLREVDDAKR…AARRAEEAKR (69 aa)). Residues 162–177 (PAAAQPDAADSRASAP) are compositionally biased toward low complexity. Basic and acidic residues predominate over residues 187-208 (SRKEREREADRDRTTKKDDSRR). In terms of domain architecture, tr-type G spans 335–509 (PRPPIITIMG…ELLDLRANPK (175 aa)). A G1 region spans residues 344–351 (GHVDHGKT). 344–351 (GHVDHGKT) provides a ligand contact to GTP. Residues 369 to 373 (GITQH) form a G2 region. Residues 391–394 (DTPG) are G3. GTP contacts are provided by residues 391–395 (DTPGH) and 445–448 (NKID). A G4 region spans residues 445-448 (NKID). Residues 481–483 (SAK) are G5.

The protein belongs to the TRAFAC class translation factor GTPase superfamily. Classic translation factor GTPase family. IF-2 subfamily.

It is found in the cytoplasm. In terms of biological role, one of the essential components for the initiation of protein synthesis. Protects formylmethionyl-tRNA from spontaneous hydrolysis and promotes its binding to the 30S ribosomal subunits. Also involved in the hydrolysis of GTP during the formation of the 70S ribosomal complex. The sequence is that of Translation initiation factor IF-2 from Cereibacter sphaeroides (strain ATCC 17025 / ATH 2.4.3) (Rhodobacter sphaeroides).